The following is a 507-amino-acid chain: Glucose-6-phosphate isomerase (507 aa).

The active-site Proton donor is the Glu-337. Residues His-368 and Lys-478 contribute to the active site.

The protein belongs to the GPI family.

It localises to the cytoplasm. It catalyses the reaction alpha-D-glucose 6-phosphate = beta-D-fructose 6-phosphate. It functions in the pathway carbohydrate biosynthesis; gluconeogenesis. The protein operates within carbohydrate degradation; glycolysis; D-glyceraldehyde 3-phosphate and glycerone phosphate from D-glucose: step 2/4. Its function is as follows. Catalyzes the reversible isomerization of glucose-6-phosphate to fructose-6-phosphate. In Novosphingobium aromaticivorans (strain ATCC 700278 / DSM 12444 / CCUG 56034 / CIP 105152 / NBRC 16084 / F199), this protein is Glucose-6-phosphate isomerase.